Reading from the N-terminus, the 105-residue chain is Iron-sulfur cluster assembly protein CyaY (105 aa).

It belongs to the frataxin family.

Functionally, involved in iron-sulfur (Fe-S) cluster assembly. May act as a regulator of Fe-S biogenesis. This is Iron-sulfur cluster assembly protein CyaY from Photobacterium profundum (strain SS9).